Here is a 459-residue protein sequence, read N- to C-terminus: Plasma alpha-L-fucosidase (459 aa).

A signal peptide spans 1 to 23 (MRLGLLMFLPLLLLATRYRAVTA). 2 N-linked (GlcNAc...) asparagine glycosylation sites follow: N163 and N231. The residue at position 293 (S293) is a Phosphoserine. The N-linked (GlcNAc...) asparagine glycan is linked to N369.

This sequence belongs to the glycosyl hydrolase 29 family. Homotetramer.

The protein resides in the secreted. The enzyme catalyses an alpha-L-fucoside + H2O = L-fucose + an alcohol. Alpha-L-fucosidase is responsible for hydrolyzing the alpha-1,6-linked fucose joined to the reducing-end N-acetylglucosamine of the carbohydrate moieties of glycoproteins. This chain is Plasma alpha-L-fucosidase (Fuca2), found in Rattus norvegicus (Rat).